The chain runs to 82 residues: MTPEPPAPDTASRDAENLDAAAAQQRLRKLHSKATRLKLDLHDLAEDLPIGWEGLLDVARRTYDAYAEIALLEGLAEKETSR.

This sequence belongs to the UPF0437 family.

This Frankia alni protein is UPF0437 protein in nifX-nifW intergenic region.